An 898-amino-acid chain; its full sequence is DNA mismatch repair protein MutS (898 aa).

646–653 (GPNMGGKS) is a binding site for ATP.

Belongs to the DNA mismatch repair MutS family.

This protein is involved in the repair of mismatches in DNA. It is possible that it carries out the mismatch recognition step. This protein has a weak ATPase activity. The chain is DNA mismatch repair protein MutS from Brucella ovis (strain ATCC 25840 / 63/290 / NCTC 10512).